A 169-amino-acid chain; its full sequence is Small ribosomal subunit protein uS5 (169 aa).

The S5 DRBM domain maps to 15 to 79; the sequence is LKDQVVAINR…ESAKKNLVKV (65 aa).

Belongs to the universal ribosomal protein uS5 family. In terms of assembly, part of the 30S ribosomal subunit. Contacts proteins S4 and S8.

In terms of biological role, with S4 and S12 plays an important role in translational accuracy. Its function is as follows. Located at the back of the 30S subunit body where it stabilizes the conformation of the head with respect to the body. The polypeptide is Small ribosomal subunit protein uS5 (Koribacter versatilis (strain Ellin345)).